Reading from the N-terminus, the 276-residue chain is Phosphatidylglycerol--prolipoprotein diacylglyceryl transferase (276 aa).

A run of 3 helical transmembrane segments spans residues 17–37 (LAIHWYGLTYLAAFGLFFFLA), 63–83 (ILFLGVMGVVIGGRLGYCLFY), and 95–115 (ILAVWQGGMSFHGGMLGVLAS). Arg146 lines the a 1,2-diacyl-sn-glycero-3-phospho-(1'-sn-glycerol) pocket. The next 3 membrane-spanning stretches (helical) occupy residues 182–202 (SQVYQFLLEGLLLFVLLWLYA), 209–229 (GQVSGAFLVGYGVFRFIAEYF), and 235–255 (FLGILALGLSMGQWLCVPMIV).

The protein belongs to the Lgt family.

The protein localises to the cell inner membrane. It catalyses the reaction L-cysteinyl-[prolipoprotein] + a 1,2-diacyl-sn-glycero-3-phospho-(1'-sn-glycerol) = an S-1,2-diacyl-sn-glyceryl-L-cysteinyl-[prolipoprotein] + sn-glycerol 1-phosphate + H(+). It functions in the pathway protein modification; lipoprotein biosynthesis (diacylglyceryl transfer). In terms of biological role, catalyzes the transfer of the diacylglyceryl group from phosphatidylglycerol to the sulfhydryl group of the N-terminal cysteine of a prolipoprotein, the first step in the formation of mature lipoproteins. This is Phosphatidylglycerol--prolipoprotein diacylglyceryl transferase from Polaromonas sp. (strain JS666 / ATCC BAA-500).